We begin with the raw amino-acid sequence, 457 residues long: Argininosuccinate lyase (457 aa).

Belongs to the lyase 1 family. Argininosuccinate lyase subfamily.

The protein resides in the cytoplasm. It catalyses the reaction 2-(N(omega)-L-arginino)succinate = fumarate + L-arginine. The protein operates within amino-acid biosynthesis; L-arginine biosynthesis; L-arginine from L-ornithine and carbamoyl phosphate: step 3/3. In Haemophilus influenzae (strain ATCC 51907 / DSM 11121 / KW20 / Rd), this protein is Argininosuccinate lyase.